The sequence spans 330 residues: 3',5'-cyclic-nucleotide phosphodiesterase (330 aa).

The N-terminal stretch at 1–22 (MFKNKLAVLFTCLSVFSFSAQS) is a signal peptide.

The protein belongs to the cyclic nucleotide phosphodiesterase class-II family.

It localises to the periplasm. It carries out the reaction a nucleoside 3',5'-cyclic phosphate + H2O = a nucleoside 5'-phosphate + H(+). Functionally, seems to allow the organism to grow on cAMP. The polypeptide is 3',5'-cyclic-nucleotide phosphodiesterase (cpdP) (Aliivibrio fischeri (Vibrio fischeri)).